The chain runs to 129 residues: Glycine cleavage system H protein (129 aa).

A Lipoyl-binding domain is found at 24–106 (SVVVGVTQHA…YGAGWIVEIE (83 aa)). Lysine 65 carries the N6-lipoyllysine modification.

The protein belongs to the GcvH family. The glycine cleavage system is composed of four proteins: P, T, L and H. The cofactor is (R)-lipoate.

Functionally, the glycine cleavage system catalyzes the degradation of glycine. The H protein shuttles the methylamine group of glycine from the P protein to the T protein. This Myxococcus xanthus (strain DK1622) protein is Glycine cleavage system H protein.